A 432-amino-acid polypeptide reads, in one-letter code: MTKSLSEQLFETAEGLLPGGVNSPVRAFRAVGGVPRFIDRAEGSRIYDIDGREYIDYVGSWGPMILGHSHPQVVEAIRKAVERGTSYGAPTPGEIALARTIIEAFPSMEMIRMVSSGTEAVMSAIRLARGFTGRDKILKFEGCYHGHGDSLLVKAGSGVATLGIPGSPGVPACLAELTITVPFNSNEAFRKAVDRHGKELACVIVEPVAANMGVVNPRPGFLETLRELTRKAGIVLIFDEVITGFRLAYGGFQKLCRLEPDLTCLGKIIGGGLPVGAFGGKRTIMDFLAPNGPVYQAGTLSGNPLAMSAGLATLETLRSRRDDYAALDRRTADLCAAMGKLFRTAELPVRINRAGSLFTVFFTDSDVFDYETASHCNLERYARFFKGMLDRGVYLAPSAFEAAFVSFAHSDEDLEKTLQACAETIKTLGGNP.

N6-(pyridoxal phosphate)lysine is present on K267.

Belongs to the class-III pyridoxal-phosphate-dependent aminotransferase family. HemL subfamily. Homodimer. It depends on pyridoxal 5'-phosphate as a cofactor.

It is found in the cytoplasm. The catalysed reaction is (S)-4-amino-5-oxopentanoate = 5-aminolevulinate. It participates in porphyrin-containing compound metabolism; protoporphyrin-IX biosynthesis; 5-aminolevulinate from L-glutamyl-tRNA(Glu): step 2/2. This is Glutamate-1-semialdehyde 2,1-aminomutase from Syntrophus aciditrophicus (strain SB).